The chain runs to 1138 residues: Serine/threonine/tyrosine-interacting-like protein 2 (1138 aa).

A disordered region spans residues Met1–Ala20. Residues Asn132–Glu280 enclose the Tyrosine-protein phosphatase domain. Ser291 carries the phosphoserine modification. Disordered regions lie at residues Glu309–Ile336, Glu348–Met473, Ala486–Glu515, Lys552–Asn575, Gln592–Arg618, Ala660–Leu694, Ser761–Thr800, and Phe850–Ile1117. The segment covering Ser316–Lys331 has biased composition (polar residues). Ser373 carries the phosphoserine modification. Residues Asp376–Val385 show a composition bias toward acidic residues. Basic and acidic residues predominate over residues Glu386–Arg409. Thr427 bears the Phosphothreonine mark. Residues Ser503 and Ser555 each carry the phosphoserine modification. Composition is skewed to basic and acidic residues over residues Lys552–Glu567 and Val595–Leu614. The segment covering Ser672 to Pro687 has biased composition (polar residues). The span at Ser773–Ser788 shows a compositional bias: low complexity. Positions Asp858 to Asp871 are enriched in acidic residues. Ser862 is subject to Phosphoserine. A compositionally biased stretch (polar residues) spans Arg878–Ala897. Ser929 carries the phosphoserine modification. Over residues Ser936–Ser947 the composition is skewed to low complexity. Residues Arg965–Asn977 show a composition bias toward basic and acidic residues. Ser966 carries the post-translational modification Phosphoserine. The segment covering Thr980–Thr992 has biased composition (polar residues). Ser1016 carries the post-translational modification Phosphoserine. Basic and acidic residues-rich tracts occupy residues Pro1035–Phe1059 and Arg1074–Arg1091. The segment covering Gly1095–Gln1106 has biased composition (polar residues). A compositionally biased stretch (acidic residues) spans Gln1107 to Ala1116.

Belongs to the protein-tyrosine phosphatase family. Non-receptor class dual specificity subfamily.

It is found in the cytoplasm. The protein localises to the myofibril. The protein resides in the sarcomere. May be required for myofiber maturation. This Mus musculus (Mouse) protein is Serine/threonine/tyrosine-interacting-like protein 2 (Styxl2).